Here is a 200-residue protein sequence, read N- to C-terminus: NAD(P)H dehydrogenase (quinone) (200 aa).

One can recognise a Flavodoxin-like domain in the interval 4–191; that stretch reads VLVLYYSSYG…DIARYQGKRV (188 aa). Residues 10 to 15 and 79 to 81 each bind FMN; these read SSYGHV and TRF. Tyr12 contributes to the NAD(+) binding site. Trp99 serves as a coordination point for substrate. FMN-binding positions include 114 to 120 and His135; that span reads STGTQHG.

This sequence belongs to the WrbA family. Requires FMN as cofactor.

It carries out the reaction a quinone + NADH + H(+) = a quinol + NAD(+). The enzyme catalyses a quinone + NADPH + H(+) = a quinol + NADP(+). This Burkholderia lata (strain ATCC 17760 / DSM 23089 / LMG 22485 / NCIMB 9086 / R18194 / 383) protein is NAD(P)H dehydrogenase (quinone).